The chain runs to 647 residues: Pumilio homolog 3 (647 aa).

The segment covering 1–10 has biased composition (basic residues); sequence MEVKGKKKIT. Residues 1-123 are disordered; sequence MEVKGKKKIT…KKKKELKQNR (123 aa). Lys-33 bears the N6-acetyllysine mark. A compositionally biased stretch (basic residues) spans 59 to 68; that stretch reads PGKKRVKQFK. The span at 93 to 123 shows a compositional bias: basic and acidic residues; it reads FQPDGKSDESAAKKPKWDDFKKKKKELKQNR. A Nuclear localization signal motif is present at residues 105–117; that stretch reads KKPKWDDFKKKKK. Residues 142–509 enclose the PUM-HD domain; it reads ESLRRKDCDK…VVLDKSVCVL (368 aa). 11 Pumilio repeats span residues 176 to 211, 212 to 247, 248 to 276, 288 to 324, 325 to 360, 361 to 396, 397 to 434, 435 to 503, 504 to 550, 551 to 595, and 596 to 635; these read HDSTRVIQCLIQYGSEEQRKWAFEELQGDLVELSKA, KYSRNIVKKFLMYGSKPQIAEIIRSFKGHVRKMLRH, SEASAIVEYAYNDKAILEQRNMLTEELYG, PTLEKVLEVQPGKLELILDEMKQILTPMAQKEAVIKH, SLVHKVFLDFFTYAPPKLRSELIEAIREAVVYLAHT, HDGARVAMHCLWHGTPKDRKVIVKTMKTYVEKIANG, QYSHLVLLAAFDCIDDTKLVKQIIISEVISSLPSIVND, KYGR…VVLD, KSVC…IAEH, PAGH…WASI, and NRGAIVLSSLLQSCDQDVVNKVKAGLKTLIPTLEKTKSTS.

In terms of assembly, interacts with PARP1 (via catalytic domain).

It localises to the nucleus. Its subcellular location is the nucleolus. It is found in the nucleoplasm. The protein resides in the chromosome. Functionally, inhibits the poly(ADP-ribosyl)ation activity of PARP1 and the degradation of PARP1 by CASP3 following genotoxic stress. Binds to double-stranded RNA or DNA without sequence specificity. Involved in development of the eye and of primordial germ cells. The chain is Pumilio homolog 3 from Rattus norvegicus (Rat).